The following is a 143-amino-acid chain: Putative phosphotransferase IIA component SgcA (143 aa).

A PTS EIIA type-2 domain is found at 1–143 (MINDIKWVQA…DDALFALVSG (143 aa)). Histidine 63 serves as the catalytic Tele-phosphohistidine intermediate.

It localises to the cytoplasm. The phosphoenolpyruvate-dependent sugar phosphotransferase system (sugar PTS), a major carbohydrate active -transport system, catalyzes the phosphorylation of incoming sugar substrates concomitantly with their translocation across the cell membrane. This chain is Putative phosphotransferase IIA component SgcA (sgcA), found in Escherichia coli (strain K12).